Here is a 437-residue protein sequence, read N- to C-terminus: MTHYHFVGIKGSGMSSLAQIMHDLGHEVQGSDIENYVFTEVALRNKGIKILPFDANNIKEDMVVIQGNAFASSHEEIVRAHQLKLDVVSYNDFLGQIIDQYTSVAVTGAHGKTSTTGLLSHVMNGDKKTSFLIGDGTGMGLPESDYFAFEACEYRRHFLSYKPDYAIMTNIDFDHPDYFKDINDVFDAFQEMAHNVKKGIIAWGDDEHLRKIEADVPIYYYGFKDSDDIYAQNIQITDKGTAFDVYVDGEFYDHFLSPQYGDHTVLNALAVIAISYLEKLDVTNIKEALETFGGVKRRFNETTIANQVIVDDYAHHPREISATIETARKKYPHKEVVAVFQPHTFSRTQAFLNEFAESLSKADRVFLCEIFGSIRENTGALTIQDLIDKIEGASLINEDSINVLEQFDNAVILFMGAGDIQKLQNAYLDKLGMKNAF.

108–114 is an ATP binding site; that stretch reads GAHGKTS.

This sequence belongs to the MurCDEF family.

Its subcellular location is the cytoplasm. The catalysed reaction is UDP-N-acetyl-alpha-D-muramate + L-alanine + ATP = UDP-N-acetyl-alpha-D-muramoyl-L-alanine + ADP + phosphate + H(+). Its pathway is cell wall biogenesis; peptidoglycan biosynthesis. Its function is as follows. Cell wall formation. This Staphylococcus aureus (strain COL) protein is UDP-N-acetylmuramate--L-alanine ligase.